Reading from the N-terminus, the 435-residue chain is MVISPSEVVSVRRRRVSRVATISMHTSPLDQPGTGDAGGMNVYIVEAARRLAQLGVEVEIFTRQTSRDLPPVAEIAPGVSVRHVTAGPYEELDKGDLPGQLCGFLSGVLRTEAMYEPGRYDVIHSHYWLSGQVGWLAKERWGVPLVHTMHTMAKVKNLLLAEDDRPEPTARVLGEEQVVQVADRLVANTPTEAQELIDLYGAAPGRVEVVNPGVNLNVFQPASKGAARHRLDLPQDAHVLLFVGRVQPLKAPDVLLRAAARMLIDDPSLRSRLVVVCVGGPSGNGLARPSYLTDVAASLGISDVVRIVPPAPQHELADWYRAADVTVVPSHNESFGLVALESQACGTPVAAASVGGLRTAVADGVSGVLVEGHDPQDWARVLSRFVHRPAWRDALAAGAVAQAAAFGWSATAARLADVYAGAMANLHHVPIAVSS.

H25 serves as a coordination point for 1D-myo-inositol 3-phosphate. UDP-N-acetyl-alpha-D-glucosamine is bound by residues 31-32 (QP) and G39. 1D-myo-inositol 3-phosphate is bound by residues 36 to 41 (DAGGMN), K94, Y127, T151, and R171. Positions 245 and 250 each coordinate UDP-N-acetyl-alpha-D-glucosamine. The Mg(2+) site is built by Y320, R321, and A323. E333 and E341 together coordinate UDP-N-acetyl-alpha-D-glucosamine. Mg(2+) is bound at residue T347.

It belongs to the glycosyltransferase group 1 family. MshA subfamily. As to quaternary structure, homodimer.

The catalysed reaction is 1D-myo-inositol 3-phosphate + UDP-N-acetyl-alpha-D-glucosamine = 1D-myo-inositol 2-acetamido-2-deoxy-alpha-D-glucopyranoside 3-phosphate + UDP + H(+). Functionally, catalyzes the transfer of a N-acetyl-glucosamine moiety to 1D-myo-inositol 3-phosphate to produce 1D-myo-inositol 2-acetamido-2-deoxy-glucopyranoside 3-phosphate in the mycothiol biosynthesis pathway. This Streptosporangium roseum (strain ATCC 12428 / DSM 43021 / JCM 3005 / KCTC 9067 / NCIMB 10171 / NRRL 2505 / NI 9100) protein is D-inositol 3-phosphate glycosyltransferase.